Reading from the N-terminus, the 376-residue chain is Tetraacyldisaccharide 4'-kinase (376 aa).

51–58 (AVGGTGKT) contributes to the ATP binding site.

This sequence belongs to the LpxK family.

It carries out the reaction a lipid A disaccharide + ATP = a lipid IVA + ADP + H(+). Its pathway is glycolipid biosynthesis; lipid IV(A) biosynthesis; lipid IV(A) from (3R)-3-hydroxytetradecanoyl-[acyl-carrier-protein] and UDP-N-acetyl-alpha-D-glucosamine: step 6/6. Functionally, transfers the gamma-phosphate of ATP to the 4'-position of a tetraacyldisaccharide 1-phosphate intermediate (termed DS-1-P) to form tetraacyldisaccharide 1,4'-bis-phosphate (lipid IVA). The sequence is that of Tetraacyldisaccharide 4'-kinase from Bacteroides fragilis (strain ATCC 25285 / DSM 2151 / CCUG 4856 / JCM 11019 / LMG 10263 / NCTC 9343 / Onslow / VPI 2553 / EN-2).